The chain runs to 52 residues: Thiocillin (52 aa).

Residues 1–38 constitute a propeptide that is removed on maturation; it reads MSEIKKALNTLEIEDFDAIEMVDVDAMPENEALEIMGA. A cross-link (thiazole-4-carboxylic acid (Ser-Cys)) is located at residues 39-40; that stretch reads SC. Residues 39–47 constitute a cross-link (pyridine-2,5-dicarboxylic acid (Ser-Cys) (with S-48)); the sequence is SCTTCVCTC. The segment at residues 39–48 is a cross-link (pyridine-2,5-dicarboxylic acid (Ser-Ser) (with C-47)); that stretch reads SCTTCVCTCS. Threonine 42 is subject to (Z)-2,3-didehydrobutyrine. The segment at residues 42–43 is a cross-link (thiazole-4-carboxylic acid (Thr-Cys)); that stretch reads TC. Valine 44 carries the post-translational modification 3-hydroxyvaline (Val); partial. The segment at residues 44-45 is a cross-link (thiazole-4-carboxylic acid (Val-Cys)); it reads VC. An O-methylthreonine; partial modification is found at threonine 46. Residues 46–47 constitute a cross-link (thiazole-4-carboxylic acid (Thr-Cys)); that stretch reads TC. A cross-link (thiazole-4-carboxylic acid (Ser-Cys)) is located at residues 48–49; it reads SC. The segment at residues 49–50 is a cross-link (thiazole-4-carboxylic acid (Cys-Cys)); sequence CC. The residue at position 51 (threonine 51) is a (Z)-2,3-didehydrobutyrine. A 1-amino-2-propanone; alternate modification is found at threonine 52. Threonine 52 bears the Decarboxylated threonine; alternate mark.

Belongs to the thiocillin family. Maturation of thiazole and oxazole containing antibiotics involves the enzymatic condensation of a Cys, Ser or Thr with the alpha-carbonyl of the preceding amino acid to form a thioether or ether bond, then dehydration to form a double bond with the alpha-amino nitrogen. Thiazoline or oxazoline ring are dehydrogenated to form thiazole or oxazole rings. In terms of processing, maturation of pyridinyl containing antibiotics involves the cross-linking of a Ser and a Cys-Ser pair usually separated by 7 or 8 residues along the peptide chain. The Ser residues are dehydrated to didehydroalanines, then bonded between their beta carbons. The alpha carbonyl of the Cys condenses with alpha carbon of the first Ser to form a pyridinyl ring. The ring may be multiply dehydrogenated to form a pyridine ring with loss of the amino nitrogen of the first Ser. Post-translationally, the 8 possible modification isomers, differing in the presence of modifications at three positions, have been characterized in PubMed:19196969. Val-44 is modified to 3-hydroxyvaline in forms thiocillin I, thiocillin II, YM-266183, and YM-266184. Thr-46 is modified to O-methylthreonine in forms thiocillin II, thiocillin III, thiocillin IV, and YM-266184. Thr-52 is decarboxylated to (R)-1-aminopropan-2-ol in forms micrococcin P1, thiocillin I, thiocillin II, and thiocillin III. Thr-52 is decarboxylated and oxidized to 1-amino-2-propanone in forms micrococcin P2, YM-266183, YM-266184. and thiocillin IV. The structure of 2,3-didehydrobutyrines is not discussed in PubMed:19196969. However, in Fig. 3 the residues are diagrammed as Z-isomers.

It localises to the secreted. Functionally, has bacteriocidal activity against Gram-positive bacteria, but not against Gram-negative bacteria. Inhibits bacterial protein biosynthesis by acting on the elongation factor Tu (EF-Tu). This is Thiocillin from Bacillus cereus (strain ATCC 14579 / DSM 31 / CCUG 7414 / JCM 2152 / NBRC 15305 / NCIMB 9373 / NCTC 2599 / NRRL B-3711).